The primary structure comprises 178 residues: Caveolin-1 (178 aa).

Ser2 carries the post-translational modification N-acetylserine. Ser2 carries the post-translational modification Phosphoserine. The segment at 2–94 is required for homooligomerization; that stretch reads SGGKYVDSEG…WKASFTTFTV (93 aa). The Cytoplasmic segment spans residues 2 to 104; it reads SGGKYVDSEG…TKYWFYRLLS (103 aa). An N6-acetyllysine; alternate modification is found at Lys5. Residue Lys5 forms a Glycyl lysine isopeptide (Lys-Gly) (interchain with G-Cter in ubiquitin); alternate linkage. Position 6 is a phosphotyrosine (Tyr6). At Ser9 the chain carries Phosphoserine. Tyr14 carries the phosphotyrosine; by ABL1 modification. Phosphotyrosine is present on Tyr25. Residues Lys26, Lys30, Lys39, Lys47, and Lys57 each participate in a glycyl lysine isopeptide (Lys-Gly) (interchain with G-Cter in ubiquitin) cross-link. Positions 82-94 are interaction with CAVIN3; the sequence is DGIWKASFTTFTV. The segment at residues 105-125 is an intramembrane region (helical); sequence ALFGIPMALIWGIYFAILSFL. Over 126 to 178 the chain is Cytoplasmic; the sequence is HIWAVVPCIKSFLIEIQCISRVYSIYVHTFCDPLFEAIGKIFSNVRINLQKEI. The segment at 131-142 is interacts with SPRY1, SPRY2, SPRY3 and SPRY4; sequence VPCIKSFLIEIQ. 3 S-palmitoyl cysteine lipidation sites follow: Cys133, Cys143, and Cys156. The tract at residues 149–160 is interacts with SPRY1, SPRY2, and SPRY4; sequence SIYVHTFCDPLF. Residues 167-178 form an interacts with SPRY1, SPRY2, SPRY3 and SPRY4 region; sequence FSNVRINLQKEI.

This sequence belongs to the caveolin family. As to quaternary structure, homooligomer. Interacts with GLIPR2. Interacts with NOSTRIN. Interacts with SNAP25 and STX1A. Interacts (via the N-terminus) with DPP4; the interaction is direct. Interacts with CTNNB1, CDH1 and JUP. Interacts with PACSIN2; this interaction induces membrane tubulation. Interacts with SLC7A9. Interacts with BMX and BTK. Interacts with TGFBR1. Interacts with CAVIN3 (via leucine-zipper domain) in a cholesterol-sensitive manner. Interacts with CAVIN1. Interacts with EHD2 in a cholesterol-dependent manner. Forms a ternary complex with UBXN6 and VCP; mediates CAV1 targeting to lysosomes for degradation. Interacts with ABCG1; this interaction regulates ABCG1-mediated cholesterol efflux. Interacts with NEU3; this interaction enhances NEU3 sialidase activity within caveola. Interacts (via C-terminus) with SPRY1, SPRY2 (via C-terminus), SPRY3, and SPRY4. Interacts with IGFBP5; this interaction allows trafficking of IGFBP5 from the plasma membrane to the nucleus. Post-translationally, phosphorylated at Tyr-14 by ABL1 in response to oxidative stress. In terms of processing, ubiquitinated. Undergo monoubiquitination and multi- and/or polyubiquitination. Monoubiquitination of N-terminal lysines promotes integration in a ternary complex with UBXN6 and VCP which promotes oligomeric CAV1 targeting to lysosomes for degradation. Ubiquitinated by ZNRF1; leading to degradation and modulation of the TLR4-mediated immune response.

The protein localises to the golgi apparatus membrane. It localises to the cell membrane. It is found in the membrane. Its subcellular location is the caveola. The protein resides in the membrane raft. May act as a scaffolding protein within caveolar membranes. Forms a stable heterooligomeric complex with CAV2 that targets to lipid rafts and drives caveolae formation. Mediates the recruitment of CAVIN proteins (CAVIN1/2/3/4) to the caveolae. Interacts directly with G-protein alpha subunits and can functionally regulate their activity. Involved in the costimulatory signal essential for T-cell receptor (TCR)-mediated T-cell activation. Its binding to DPP4 induces T-cell proliferation and NF-kappa-B activation in a T-cell receptor/CD3-dependent manner. Recruits CTNNB1 to caveolar membranes and may regulate CTNNB1-mediated signaling through the Wnt pathway. Negatively regulates TGFB1-mediated activation of SMAD2/3 by mediating the internalization of TGFBR1 from membrane rafts leading to its subsequent degradation. Binds 20(S)-hydroxycholesterol (20(S)-OHC). The sequence is that of Caveolin-1 (CAV1) from Equus caballus (Horse).